We begin with the raw amino-acid sequence, 493 residues long: Acetyl-coenzyme A carboxylase carboxyl transferase subunit beta (493 aa).

One can recognise a CoA carboxyltransferase N-terminal domain in the interval 231–493; that stretch reads LWVQCENCYG…FKLHAFFPLN (263 aa). Residues cysteine 235, cysteine 238, cysteine 254, and cysteine 257 each contribute to the Zn(2+) site. The C4-type zinc-finger motif lies at 235 to 257; sequence CENCYGLNYKKFLKSKINLCEQC.

This sequence belongs to the AccD/PCCB family. As to quaternary structure, acetyl-CoA carboxylase is a heterohexamer composed of biotin carboxyl carrier protein, biotin carboxylase and 2 subunits each of ACCase subunit alpha and ACCase plastid-coded subunit beta (accD). Zn(2+) is required as a cofactor.

The protein localises to the plastid stroma. The enzyme catalyses N(6)-carboxybiotinyl-L-lysyl-[protein] + acetyl-CoA = N(6)-biotinyl-L-lysyl-[protein] + malonyl-CoA. The protein operates within lipid metabolism; malonyl-CoA biosynthesis; malonyl-CoA from acetyl-CoA: step 1/1. Its function is as follows. Component of the acetyl coenzyme A carboxylase (ACC) complex. Biotin carboxylase (BC) catalyzes the carboxylation of biotin on its carrier protein (BCCP) and then the CO(2) group is transferred by the transcarboxylase to acetyl-CoA to form malonyl-CoA. The sequence is that of Acetyl-coenzyme A carboxylase carboxyl transferase subunit beta from Epifagus virginiana (Beechdrops).